Reading from the N-terminus, the 321-residue chain is Lipoyl synthase (321 aa).

[4Fe-4S] cluster contacts are provided by Cys68, Cys73, Cys79, Cys94, Cys98, Cys101, and Ser308. The region spanning 80–297 (FNHGTATFMI…KELAESIGFT (218 aa)) is the Radical SAM core domain.

Belongs to the radical SAM superfamily. Lipoyl synthase family. It depends on [4Fe-4S] cluster as a cofactor.

It localises to the cytoplasm. It carries out the reaction [[Fe-S] cluster scaffold protein carrying a second [4Fe-4S](2+) cluster] + N(6)-octanoyl-L-lysyl-[protein] + 2 oxidized [2Fe-2S]-[ferredoxin] + 2 S-adenosyl-L-methionine + 4 H(+) = [[Fe-S] cluster scaffold protein] + N(6)-[(R)-dihydrolipoyl]-L-lysyl-[protein] + 4 Fe(3+) + 2 hydrogen sulfide + 2 5'-deoxyadenosine + 2 L-methionine + 2 reduced [2Fe-2S]-[ferredoxin]. Its pathway is protein modification; protein lipoylation via endogenous pathway; protein N(6)-(lipoyl)lysine from octanoyl-[acyl-carrier-protein]: step 2/2. Functionally, catalyzes the radical-mediated insertion of two sulfur atoms into the C-6 and C-8 positions of the octanoyl moiety bound to the lipoyl domains of lipoate-dependent enzymes, thereby converting the octanoylated domains into lipoylated derivatives. In Shewanella pealeana (strain ATCC 700345 / ANG-SQ1), this protein is Lipoyl synthase.